A 331-amino-acid chain; its full sequence is Phosphoribosylformylglycinamidine cyclo-ligase (331 aa).

The protein belongs to the AIR synthase family.

Its subcellular location is the cytoplasm. The enzyme catalyses 2-formamido-N(1)-(5-O-phospho-beta-D-ribosyl)acetamidine + ATP = 5-amino-1-(5-phospho-beta-D-ribosyl)imidazole + ADP + phosphate + H(+). It participates in purine metabolism; IMP biosynthesis via de novo pathway; 5-amino-1-(5-phospho-D-ribosyl)imidazole from N(2)-formyl-N(1)-(5-phospho-D-ribosyl)glycinamide: step 2/2. This Clostridium botulinum (strain ATCC 19397 / Type A) protein is Phosphoribosylformylglycinamidine cyclo-ligase.